Reading from the N-terminus, the 98-residue chain is DNA-binding protein HU (98 aa).

The protein belongs to the bacterial histone-like protein family. As to quaternary structure, homodimer.

Its function is as follows. Histone-like DNA-binding protein which is capable of wrapping DNA to stabilize it, and thus to prevent its denaturation under extreme environmental conditions. This is DNA-binding protein HU (hup) from Campylobacter jejuni subsp. jejuni serotype O:2 (strain ATCC 700819 / NCTC 11168).